The sequence spans 454 residues: tRNA modification GTPase MnmE (454 aa).

The (6S)-5-formyl-5,6,7,8-tetrahydrofolate site is built by Arg23, Glu80, and Lys120. The region spanning 216–377 (GMKVVIAGRP…LRNHLKQSMG (162 aa)) is the TrmE-type G domain. Residue Asn226 participates in K(+) binding. GTP is bound by residues 226–231 (NAGKSS), 245–251 (TDIAGTT), 270–273 (DTAG), 335–338 (NKAD), and 358–360 (SAR). Ser230 is a Mg(2+) binding site. Residues Thr245, Ile247, and Thr250 each coordinate K(+). Thr251 lines the Mg(2+) pocket. Lys454 is a (6S)-5-formyl-5,6,7,8-tetrahydrofolate binding site.

It belongs to the TRAFAC class TrmE-Era-EngA-EngB-Septin-like GTPase superfamily. TrmE GTPase family. Homodimer. Heterotetramer of two MnmE and two MnmG subunits. K(+) is required as a cofactor.

Its subcellular location is the cytoplasm. Functionally, exhibits a very high intrinsic GTPase hydrolysis rate. Involved in the addition of a carboxymethylaminomethyl (cmnm) group at the wobble position (U34) of certain tRNAs, forming tRNA-cmnm(5)s(2)U34. This is tRNA modification GTPase MnmE from Salmonella arizonae (strain ATCC BAA-731 / CDC346-86 / RSK2980).